We begin with the raw amino-acid sequence, 301 residues long: Tyrosine recombinase XerD (301 aa).

One can recognise a Core-binding (CB) domain in the interval 6–89 (PLHQQLIEQF…ALKVFFHFLK (84 aa)). The 186-residue stretch at 108–293 (RLPSILSTEE…ASESIIEKFH (186 aa)) folds into the Tyr recombinase domain. Residues Arg152, Lys174, His245, Arg248, and His271 contribute to the active site. Tyr280 (O-(3'-phospho-DNA)-tyrosine intermediate) is an active-site residue.

Belongs to the 'phage' integrase family. XerD subfamily. In terms of assembly, forms a cyclic heterotetrameric complex composed of two molecules of XerC and two molecules of XerD.

It localises to the cytoplasm. Functionally, site-specific tyrosine recombinase, which acts by catalyzing the cutting and rejoining of the recombining DNA molecules. The XerC-XerD complex is essential to convert dimers of the bacterial chromosome into monomers to permit their segregation at cell division. It also contributes to the segregational stability of plasmids. In Chlamydia muridarum (strain MoPn / Nigg), this protein is Tyrosine recombinase XerD.